Here is a 368-residue protein sequence, read N- to C-terminus: COP9 signalosome complex subunit 5 (368 aa).

The region spanning 56 to 193 (IKISAIALLK…IGAFRTYPEG (138 aa)) is the MPN domain. Zn(2+) is bound by residues H139, H141, and D152. The JAMM motif motif lies at 139–152 (HSHPGYGCWLSGID). Residues 347-368 (TEPEKAGPSPSAPEPAVEMADA) are disordered.

This sequence belongs to the peptidase M67A family. CSN5 subfamily. Component of the CSN complex, probably composed of csn-1, csn-2, csn-3, csn-4, csn-5, csn-6 and csn-7. Within the complex it probably interacts directly with csn-1. Interacts with glh-1 and glh-3. Interacts with lag-1. Interacts with kgb-1. A divalent metal cation serves as cofactor.

The protein resides in the cytoplasm. It localises to the nucleus. Its function is as follows. Probable protease subunit of the COP9 signalosome complex (CSN), a complex involved in various cellular and developmental processes. The CSN complex is an essential regulator of the ubiquitin (Ubl) conjugation pathway by mediating the deneddylation of the cullin subunits of the SCF-type E3 ligase complexes, leading to decrease the Ubl ligase activity of SCF. In the complex, it probably acts as the catalytic center that mediates the cleavage of Nedd8 from cullins. It however has no metalloprotease activity by itself and requires the other subunits of the CSN complex. The CSN complex plays an essential role in embryogenesis and oogenesis and is required to regulate microtubule stability in the early embryo. Mediates mei-3/katanin targeting for degradation at the meiosis to mitosis transition via deneddylation of cul-3. May stabilize glh-1 protein levels by antagonizing kgb-1. The sequence is that of COP9 signalosome complex subunit 5 (csn-5) from Caenorhabditis elegans.